The sequence spans 83 residues: Large ribosomal subunit protein bL27 (83 aa).

The protein belongs to the bacterial ribosomal protein bL27 family.

The polypeptide is Large ribosomal subunit protein bL27 (Treponema denticola (strain ATCC 35405 / DSM 14222 / CIP 103919 / JCM 8153 / KCTC 15104)).